We begin with the raw amino-acid sequence, 187 residues long: Early nodulin-55-2 (187 aa).

A signal peptide spans 1–26 (MASCLPNASPFLVMLAMCLLISTSEA). The 106-residue stretch at 27–132 (EKYVVGGSEK…GLKLAVLVIS (106 aa)) folds into the Phytocyanin domain. N-linked (GlcNAc...) asparagine glycosylation is found at Asn78, Asn116, and Asn134. The cysteines at positions 85 and 120 are disulfide-linked. The disordered stretch occupies residues 138–167 (KNLLSPSPSPSPPPSSLLSPSPSPLPNNQG). Over residues 144–162 (SPSPSPPPSSLLSPSPSPL) the composition is skewed to pro residues.

This sequence belongs to the early nodulin-like (ENODL) family.

The protein resides in the symbiosome. The protein localises to the peribacteroid membrane. Its function is as follows. May act as a carbohydrate transporter. This chain is Early nodulin-55-2, found in Glycine max (Soybean).